A 491-amino-acid polypeptide reads, in one-letter code: 2-aminomuconic 6-semialdehyde dehydrogenase (491 aa).

Active-site residues include E252 and C286.

The protein belongs to the aldehyde dehydrogenase family. As to quaternary structure, homotrimer.

The catalysed reaction is 2-aminomuconate 6-semialdehyde + NAD(+) + H2O = (2Z,4E)-2-aminomuconate + NADH + 2 H(+). Strongly inhibited by Ag(+) and Hg(+), and comnpletely inhibited by p-chloromercuribenzoic acid. Its function is as follows. Involved in the modified meta-cleavage pathway for 2-aminophenol catabolism. The enzyme is also active toward 2-hydroxymuconic 6-semialdehyde, acetaldehyde, propionaldehyde, and butyraldehyde. The polypeptide is 2-aminomuconic 6-semialdehyde dehydrogenase (amnC) (Pseudomonas sp).